Reading from the N-terminus, the 435-residue chain is Arginine biosynthesis bifunctional protein ArgJ, mitochondrial (435 aa).

Substrate-binding residues include T179, K205, T216, E302, N430, and S435. The active-site Nucleophile is the T216.

It belongs to the ArgJ family. As to quaternary structure, heterodimer of an alpha and a beta chain. Post-translationally, the alpha and beta chains are autoproteolytically processed from a single precursor protein within the mitochondrion.

The protein resides in the mitochondrion matrix. It catalyses the reaction N(2)-acetyl-L-ornithine + L-glutamate = N-acetyl-L-glutamate + L-ornithine. It carries out the reaction L-glutamate + acetyl-CoA = N-acetyl-L-glutamate + CoA + H(+). The protein operates within amino-acid biosynthesis; L-arginine biosynthesis; L-ornithine and N-acetyl-L-glutamate from L-glutamate and N(2)-acetyl-L-ornithine (cyclic): step 1/1. It functions in the pathway amino-acid biosynthesis; L-arginine biosynthesis; N(2)-acetyl-L-ornithine from L-glutamate: step 1/4. In terms of biological role, catalyzes two activities which are involved in the cyclic version of arginine biosynthesis: the synthesis of acetylglutamate from glutamate and acetyl-CoA, and of ornithine by transacetylation between acetylornithine and glutamate. The protein is Arginine biosynthesis bifunctional protein ArgJ, mitochondrial of Schizosaccharomyces japonicus (strain yFS275 / FY16936) (Fission yeast).